Reading from the N-terminus, the 384-residue chain is N-acetyldiaminopimelate deacetylase (384 aa).

Residue Asp74 is part of the active site. Glu133 (proton acceptor) is an active-site residue.

This sequence belongs to the peptidase M20A family. N-acetyldiaminopimelate deacetylase subfamily.

The catalysed reaction is N-acetyl-(2S,6S)-2,6-diaminopimelate + H2O = (2S,6S)-2,6-diaminopimelate + acetate. It participates in amino-acid biosynthesis; L-lysine biosynthesis via DAP pathway; LL-2,6-diaminopimelate from (S)-tetrahydrodipicolinate (acetylase route): step 3/3. In terms of biological role, catalyzes the conversion of N-acetyl-diaminopimelate to diaminopimelate and acetate. The chain is N-acetyldiaminopimelate deacetylase from Pediococcus pentosaceus (strain ATCC 25745 / CCUG 21536 / LMG 10740 / 183-1w).